A 233-amino-acid polypeptide reads, in one-letter code: Snake venom serine protease BthaTL (233 aa).

In terms of domain architecture, Peptidase S1 spans 1–224 (VIGGDECDIN…YLPWIQSIIA (224 aa)). 6 disulfides stabilise this stretch: cysteine 7–cysteine 138, cysteine 25–cysteine 41, cysteine 73–cysteine 231, cysteine 117–cysteine 185, cysteine 149–cysteine 164, and cysteine 175–cysteine 200. Residues histidine 40 and aspartate 85 each act as charge relay system in the active site. Serine 179 acts as the Charge relay system in catalysis.

This sequence belongs to the peptidase S1 family. Snake venom subfamily. In terms of assembly, monomer. As to expression, expressed by the venom gland.

It is found in the secreted. In terms of biological role, snake venom serine protease that may act in the hemostasis system of the prey. The protein is Snake venom serine protease BthaTL of Bothrops alternatus (Urutu).